We begin with the raw amino-acid sequence, 513 residues long: GMP synthase [glutamine-hydrolyzing] (513 aa).

A Glutamine amidotransferase type-1 domain is found at 8–198; sequence KIIVLDYGSQ…ALNICGAKGN (191 aa). Cys-85 acts as the Nucleophile in catalysis. Catalysis depends on residues His-172 and Glu-174. The 190-residue stretch at 199–388 folds into the GMPS ATP-PPase domain; the sequence is WSMENFIDMQ…LGMPDEIVWR (190 aa). 226–232 provides a ligand contact to ATP; it reads SGGVDSS.

As to quaternary structure, homodimer.

It carries out the reaction XMP + L-glutamine + ATP + H2O = GMP + L-glutamate + AMP + diphosphate + 2 H(+). It functions in the pathway purine metabolism; GMP biosynthesis; GMP from XMP (L-Gln route): step 1/1. In terms of biological role, catalyzes the synthesis of GMP from XMP. This Lactococcus lactis subsp. cremoris (strain MG1363) protein is GMP synthase [glutamine-hydrolyzing] (guaA).